A 138-amino-acid chain; its full sequence is Large ribosomal subunit protein eL14B (138 aa).

The residue at position 2 (Ser2) is an N-acetylserine.

The protein belongs to the eukaryotic ribosomal protein eL14 family. As to quaternary structure, component of the large ribosomal subunit (LSU). Mature yeast ribosomes consist of a small (40S) and a large (60S) subunit. The 40S small subunit contains 1 molecule of ribosomal RNA (18S rRNA) and 33 different proteins (encoded by 57 genes). The large 60S subunit contains 3 rRNA molecules (25S, 5.8S and 5S rRNA) and 46 different proteins (encoded by 81 genes). In terms of processing, N-terminally acetylated by acetyltransferase NatA.

The protein localises to the cytoplasm. In terms of biological role, component of the ribosome, a large ribonucleoprotein complex responsible for the synthesis of proteins in the cell. The small ribosomal subunit (SSU) binds messenger RNAs (mRNAs) and translates the encoded message by selecting cognate aminoacyl-transfer RNA (tRNA) molecules. The large subunit (LSU) contains the ribosomal catalytic site termed the peptidyl transferase center (PTC), which catalyzes the formation of peptide bonds, thereby polymerizing the amino acids delivered by tRNAs into a polypeptide chain. The nascent polypeptides leave the ribosome through a tunnel in the LSU and interact with protein factors that function in enzymatic processing, targeting, and the membrane insertion of nascent chains at the exit of the ribosomal tunnel. This Saccharomyces cerevisiae (strain ATCC 204508 / S288c) (Baker's yeast) protein is Large ribosomal subunit protein eL14B.